The primary structure comprises 247 residues: ATP synthase subunit a, chloroplastic (247 aa).

Transmembrane regions (helical) follow at residues 38 to 58 (QVLITSWVVITILLGSVVIAV), 95 to 115 (VPFIGTMFLFIFVSNWSGALL), 134 to 154 (INTTVALALLTSAAYFYAGLS), 199 to 219 (LVVVVLVSLVPLVVPIPVMFL), and 220 to 240 (GLFTSGIQALIFATLAAAYIG).

It belongs to the ATPase A chain family. In terms of assembly, F-type ATPases have 2 components, CF(1) - the catalytic core - and CF(0) - the membrane proton channel. CF(1) has five subunits: alpha(3), beta(3), gamma(1), delta(1), epsilon(1). CF(0) has four main subunits: a, b, b' and c.

The protein resides in the plastid. It is found in the chloroplast thylakoid membrane. Its function is as follows. Key component of the proton channel; it plays a direct role in the translocation of protons across the membrane. This Agrostis stolonifera (Creeping bentgrass) protein is ATP synthase subunit a, chloroplastic.